The primary structure comprises 862 residues: Transcription initiation factor TFIID subunit 4B (862 aa).

The tract at residues 100–241 (NTTTIQFPAN…TPSNEPNLKA (142 aa)) is sufficient for interaction with ZNF628. A compositionally biased stretch (polar residues) spans 219 to 237 (VTTLKPSSLGASSTPSNEP). The tract at residues 219 to 239 (VTTLKPSSLGASSTPSNEPNL) is disordered. In terms of domain architecture, TAFH spans 256–353 (LENVKKCKNF…CVQQTSSDMV (98 aa)). A required for interaction with P65/RELA region spans residues 511–533 (PGPVLSQPAGIPQAVQVKQLVVQ). The Nuclear export signal signature appears at 516 to 556 (SQPAGIPQAVQVKQLVVQQPSGGNEKQVTTISHSSTLTIQK). Ser595 carries the phosphoserine modification. The Histone-fold domain maps to 653–702 (PFLFIGALQKRILDIGKKHDITELNSDAVNLISQATQERLRGLLEKLTAI). Positions 722 to 787 (TRSQLKFLEK…LAQIQHRDAN (66 aa)) form a coiled coil. The required for interaction with TAF12 stretch occupies residues 830–862 (PRITRICLRDLIFCMEQEREMKYSRALYLALLK).

It belongs to the TAF4 family. In terms of assembly, TFIID is composed of TATA binding protein (TBP) and a number of TBP-associated factors (TAFs). Heterodimerizes with TAF12/TFII20 via the C-terminal H2A-like histone-fold domain. This heterodimer forms a histone-like octamer with the TAF6/TAFII70-TAF9/TAFII31 heterodimer. Interacts with P65/RELA homodimers and P65/RELA-REL heterodimers. Interaction with POU2AF1, via its C-terminal activation domain, is required for octamer-dependent transcription. Interacts with ZNF628. Post-translationally, under stimulation by forskolin, Isoform 1 is phosphorylated by protein kinase A (PKA). As to expression, preferentially expressed in ovarian granulosa cells (at protein level). Highly expressed in B-cells.

The protein resides in the nucleus. It localises to the cytoplasm. In terms of biological role, cell type-specific subunit of the general transcription factor TFIID that may function as a gene-selective coactivator in certain cells. TFIID is a multimeric protein complex that plays a central role in mediating promoter responses to various activators and repressors. TAF4B is a transcriptional coactivator of the p65/RELA NF-kappa-B subunit. Involved in the activation of a subset of antiapoptotic genes including TNFAIP3. May be involved in regulating folliculogenesis. Through interaction with OCBA/POU2AF1, acts as a coactivator of B-cell-specific transcription. Plays a role in spermiogenesis and oogenesis. This Homo sapiens (Human) protein is Transcription initiation factor TFIID subunit 4B (TAF4B).